A 969-amino-acid polypeptide reads, in one-letter code: GATOR2 complex protein Wdr59 (969 aa).

Residues 1 to 24 (MPPTETLRPGERGTAGGPGAGAPE) form a disordered region. WD repeat units follow at residues 127–167 (GHTR…KPAL), 172–211 (VCMS…CPTH), 215–255 (AHLN…RAEK), 258–303 (TTMS…DPIC), and 307–351 (GHTD…LKLC). At threonine 373 the chain carries Phosphothreonine. The RWD domain maps to 435–538 (HEFSLLNTNM…RALVAAMKKK (104 aa)). Residues 891–911 (ECRKCAKPKRTPKCEPCKRPV) form a C4-type zinc finger. Cysteine 892, cysteine 895, cysteine 904, cysteine 907, cysteine 917, cysteine 928, histidine 933, histidine 936, histidine 939, cysteine 950, cysteine 953, cysteine 955, and cysteine 957 together coordinate Zn(2+). The RING-type; atypical zinc finger occupies 912–960 (LFCVLCRLPVKGAANACLACGHGGHIDHMMQWFEKHNVCATCGCKCLER).

It belongs to the WD repeat WDR59 family. Component of the GATOR complex consisting of mio, Nup44A/Seh1, Im11, Nplr3, Nplr2, Wdr24, Wdr59 and Sec13. Within the GATOR complex, probable component of the GATOR2 subcomplex which is likely composed of mio, Nup44A/Seh1, Wdr24, Wdr59 and Sec13. The GATOR2 complex associates with unmet in the absence of S-adenosyl-L-methionine; the mio-Wdr24-Nup44A subcomplex is essential and sufficient for this interaction while Wdr59 and Sec13 are dispensable. This association acts as a nutrient sensor to inhibit mTORC1 signaling in the absence of methionine.

Its subcellular location is the lysosome membrane. A component of the GATOR complex, which functions as a regulator of the amino acid-sensing branch of the mTORC1 signaling pathway. The two GATOR subcomplexes, GATOR1 and GATOR2, regulate the mTORC1 pathway in order to mediate metabolic homeostasis, female gametogenesis and the response to amino acid limitation and complete starvation. GATOR2 activates the mTORC1 signaling pathway through the inhibition of the GATOR1 subcomplex, controlling the switch to cell proliferation and growth under nutrient replete conditions and during female oocyte development. Acts as an atypical component of the GATOR2 subcomplex, which can either promote or inhibit mTORC1 signaling, depending on tissues: inhibits mTORC1 activity by preventing the activity of GATOR2 in the ovary and the eye imaginal disk brain, while it promotes mTORC1 activity in the fat body. The sequence is that of GATOR2 complex protein Wdr59 from Drosophila melanogaster (Fruit fly).